The primary structure comprises 130 residues: Holo-[acyl-carrier-protein] synthase (130 aa).

Asp9 and Glu58 together coordinate Mg(2+).

This sequence belongs to the P-Pant transferase superfamily. AcpS family. Mg(2+) serves as cofactor.

It is found in the cytoplasm. The enzyme catalyses apo-[ACP] + CoA = holo-[ACP] + adenosine 3',5'-bisphosphate + H(+). In terms of biological role, transfers the 4'-phosphopantetheine moiety from coenzyme A to a Ser of acyl-carrier-protein. The polypeptide is Holo-[acyl-carrier-protein] synthase (Mycobacterium sp. (strain JLS)).